The following is a 173-amino-acid chain: Superoxide dismutase [Cu-Zn] 2 (173 aa).

A signal peptide spans 1–19 (MKRLSLAMVTLLACAGAQA). 3 residues coordinate Cu cation: His-67, His-69, and His-92. The cysteines at positions 74 and 169 are disulfide-linked. 4 residues coordinate Zn(2+): His-92, His-101, His-109, and Asp-112. His-147 lines the Cu cation pocket.

The protein belongs to the Cu-Zn superoxide dismutase family. In terms of assembly, monomer. Cu cation serves as cofactor. Requires Zn(2+) as cofactor.

It is found in the periplasm. It catalyses the reaction 2 superoxide + 2 H(+) = H2O2 + O2. Its function is as follows. Destroys radicals which are normally produced within the cells and which are toxic to biological systems. The sequence is that of Superoxide dismutase [Cu-Zn] 2 (sodC) from Salmonella typhimurium (strain LT2 / SGSC1412 / ATCC 700720).